We begin with the raw amino-acid sequence, 227 residues long: MAYPFQLGLQDATSPIMEELTNFHDHTLMIVFLISSLVLYLISLMLSTKLIHTSTMDAQEVETIWTILPAIILIMIALPSLRILYMMDEINNPALTVKTMGHQWYWSYEYTDYEDLSFDSYMIPTNELKPGELRLLEVDNRVILPMELPIRMLISSEDVLHSWAVPSLGLKTDAIPGRLNQATVMSNRPGIFYGQCSEICGSNHSFMPIVLEMIPLKLFENWSISMS.

Over 1-14 the chain is Mitochondrial intermembrane; the sequence is MAYPFQLGLQDATS. Residues 15-45 form a helical membrane-spanning segment; the sequence is PIMEELTNFHDHTLMIVFLISSLVLYLISLM. At 46–59 the chain is on the mitochondrial matrix side; the sequence is LSTKLIHTSTMDAQ. The helical transmembrane segment at 60-87 threads the bilayer; that stretch reads EVETIWTILPAIILIMIALPSLRILYMM. At 88 to 227 the chain is on the mitochondrial intermembrane side; it reads DEINNPALTV…LFENWSISMS (140 aa). Residues His-161, Cys-196, Glu-198, Cys-200, His-204, and Met-207 each coordinate Cu cation. Glu-198 serves as a coordination point for Mg(2+).

Belongs to the cytochrome c oxidase subunit 2 family. Component of the cytochrome c oxidase (complex IV, CIV), a multisubunit enzyme composed of 14 subunits. The complex is composed of a catalytic core of 3 subunits MT-CO1, MT-CO2 and MT-CO3, encoded in the mitochondrial DNA, and 11 supernumerary subunits COX4I, COX5A, COX5B, COX6A, COX6B, COX6C, COX7A, COX7B, COX7C, COX8 and NDUFA4, which are encoded in the nuclear genome. The complex exists as a monomer or a dimer and forms supercomplexes (SCs) in the inner mitochondrial membrane with NADH-ubiquinone oxidoreductase (complex I, CI) and ubiquinol-cytochrome c oxidoreductase (cytochrome b-c1 complex, complex III, CIII), resulting in different assemblies (supercomplex SCI(1)III(2)IV(1) and megacomplex MCI(2)III(2)IV(2)). Found in a complex with TMEM177, COA6, COX18, COX20, SCO1 and SCO2. Interacts with TMEM177 in a COX20-dependent manner. Interacts with COX20. Interacts with COX16. Requires Cu cation as cofactor.

The protein resides in the mitochondrion inner membrane. It catalyses the reaction 4 Fe(II)-[cytochrome c] + O2 + 8 H(+)(in) = 4 Fe(III)-[cytochrome c] + 2 H2O + 4 H(+)(out). Functionally, component of the cytochrome c oxidase, the last enzyme in the mitochondrial electron transport chain which drives oxidative phosphorylation. The respiratory chain contains 3 multisubunit complexes succinate dehydrogenase (complex II, CII), ubiquinol-cytochrome c oxidoreductase (cytochrome b-c1 complex, complex III, CIII) and cytochrome c oxidase (complex IV, CIV), that cooperate to transfer electrons derived from NADH and succinate to molecular oxygen, creating an electrochemical gradient over the inner membrane that drives transmembrane transport and the ATP synthase. Cytochrome c oxidase is the component of the respiratory chain that catalyzes the reduction of oxygen to water. Electrons originating from reduced cytochrome c in the intermembrane space (IMS) are transferred via the dinuclear copper A center (CU(A)) of subunit 2 and heme A of subunit 1 to the active site in subunit 1, a binuclear center (BNC) formed by heme A3 and copper B (CU(B)). The BNC reduces molecular oxygen to 2 water molecules using 4 electrons from cytochrome c in the IMS and 4 protons from the mitochondrial matrix. The chain is Cytochrome c oxidase subunit 2 (MT-CO2) from Gerbilliscus robustus (Fringe-tailed gerbil).